A 156-amino-acid polypeptide reads, in one-letter code: Large ribosomal subunit protein uL15 (156 aa).

The tract at residues 14–35 is disordered; sequence GSRTHGWGRVGQHRKSGSSGGK.

Belongs to the universal ribosomal protein uL15 family. In terms of assembly, part of the 50S ribosomal subunit.

Functionally, binds to the 23S rRNA. In Pyrobaculum islandicum (strain DSM 4184 / JCM 9189 / GEO3), this protein is Large ribosomal subunit protein uL15.